A 279-amino-acid polypeptide reads, in one-letter code: Complement component 1 Q subcomponent-binding protein, mitochondrial (279 aa).

The transit peptide at 1–71 directs the protein to the mitochondrion; sequence MLPLLRCVPR…PVPCACGCGA (71 aa). The interval 74–91 is C1q binding; that stretch reads TEGDKAFVEFLTDEIKEE. N6-acetyllysine occurs at positions 89 and 92. The tract at residues 134-162 is disordered; sequence NNSIPPTFDGEEEPSQGQKAEEQEPELTS. The interval 166–210 is interaction with MAVS; the sequence is FVVEVTKTDGKKTLVLDCHYPEDEIGHEDEAESDIFSIKEVSFQT. Y185 carries the post-translational modification Phosphotyrosine. A phosphoserine mark is found at S198 and S202. T211 is subject to Phosphothreonine.

Belongs to the MAM33 family. Homotrimer; three monomers form a donut-shaped structure with an unusually asymmetric charge distribution on the surface. Interacts with CDK13, HRK, VTN, NFYB, ADRA1B, FOXC1, DDX21, DDX50, NCL, SRSF1 and SRSF9. Interacts with CD93; the association may represent a cell surface C1q receptor. Interacts with KRT1; the association represents a cell surface kininogen receptor. Interacts with CD209; the interaction is indicative for a C1q:C1QBP:CD209 signaling complex. Interacts with FBL and RRP1; the respective interactions with C1QBP are competitive. Probably associates with the mitoribosome. Interacts with MAVS; the interaction occurs upon viral transfection. Interacts with PPIF. Interacts with U2AF1L4. Interacts with PLEKHN1. Interacts with VGF-derived peptide TLQP-21. Interacts with MRE11 and RAD50; forming the MRC (MRE11-RAD50-C1QBP) complex that inhibits the activity of MRE11. In terms of tissue distribution, ubiquitous.

Its subcellular location is the mitochondrion matrix. The protein resides in the nucleus. It is found in the cell membrane. It localises to the secreted. The protein localises to the cytoplasm. Its subcellular location is the nucleolus. Functionally, multifunctional and multicompartmental protein involved in inflammation and infection processes, ribosome biogenesis, protein synthesis in mitochondria, regulation of apoptosis, transcriptional regulation and pre-mRNA splicing. At the cell surface is thought to act as an endothelial receptor for plasma proteins of the complement and kallikrein-kinin cascades. Putative receptor for C1q; specifically binds to the globular 'heads' of C1q thus inhibiting C1; may perform the receptor function through a complex with C1qR/CD93. In complex with cytokeratin-1/KRT1 is a high affinity receptor for kininogen-1/HMWK. Can also bind other plasma proteins, such as coagulation factor XII leading to its autoactivation. May function to bind initially fluid kininogen-1 to the cell membrane. The secreted form may enhance both extrinsic and intrinsic coagulation pathways. It is postulated that the cell surface form requires docking with transmembrane proteins for downstream signaling which might be specific for a cell-type or response. By acting as C1q receptor is involved in chemotaxis of immature dendritic cells and neutrophils and is proposed to signal through CD209/DC-SIGN on immature dendritic cells, through integrin alpha-4/beta-1 during trophoblast invasion of the decidua, and through integrin beta-1 during endothelial cell adhesion and spreading. Signaling involved in inhibition of innate immune response is implicating the PI3K-AKT/PKB pathway. Required for protein synthesis in mitochondria. In mitochondrial translation may be involved in formation of functional 55S mitoribosomes; the function seems to involve its RNA-binding activity. Acts as a RNA modification reader, which specifically recognizes and binds mitochondrial RNAs modified by C5-methylcytosine (m5C) in response to stress, and promotes recruitment of the mitochondrial degradosome complex, leading to their degradation. May be involved in the nucleolar ribosome maturation process; the function may involve the exchange of FBL for RRP1 in the association with pre-ribosome particles. Involved in regulation of RNA splicing by inhibiting the RNA-binding capacity of SRSF1 and its phosphorylation. Is required for the nuclear translocation of splicing factor U2AF1L4. Involved in regulation of CDKN2A- and HRK-mediated apoptosis. Stabilizes mitochondrial CDKN2A isoform smARF. May be involved in regulation of FOXC1 transcriptional activity and NFY/CCAAT-binding factor complex-mediated transcription. May play a role in antibacterial defense as it can bind to cell surface hyaluronan and inhibit Streptococcus pneumoniae hyaluronate lyase. May be involved in modulation of the immune response; ligation by HCV core protein is resulting in suppression of interleukin-12 production in monocyte-derived dendritic cells. Involved in regulation of antiviral response by inhibiting RIGI- and IFIH1-mediated signaling pathways probably involving its association with MAVS after viral infection. Acts as a regulator of DNA repair via homologous recombination by inhibiting the activity of MRE11: interacts with unphosphorylated MRE11 and RAD50 in absence of DNA damage, preventing formation and activity of the MRN complex. Following DNA damage, dissociates from phosphorylated MRE11, allowing formation of the MRN complex. The protein is Complement component 1 Q subcomponent-binding protein, mitochondrial (C1qbp) of Rattus norvegicus (Rat).